A 603-amino-acid polypeptide reads, in one-letter code: Methionine--tRNA ligase (603 aa).

The 'HIGH' region signature appears at 14-24 (PYANGPRHIGH). 4 residues coordinate Zn(2+): C146, C149, C159, and C162. The 'KMSKS' region signature appears at 354–358 (KFSSS). S357 lines the ATP pocket.

The protein belongs to the class-I aminoacyl-tRNA synthetase family. MetG type 1 subfamily. In terms of assembly, monomer. Zn(2+) serves as cofactor.

Its subcellular location is the cytoplasm. The enzyme catalyses tRNA(Met) + L-methionine + ATP = L-methionyl-tRNA(Met) + AMP + diphosphate. Its function is as follows. Is required not only for elongation of protein synthesis but also for the initiation of all mRNA translation through initiator tRNA(fMet) aminoacylation. In Salinispora tropica (strain ATCC BAA-916 / DSM 44818 / JCM 13857 / NBRC 105044 / CNB-440), this protein is Methionine--tRNA ligase.